An 847-amino-acid polypeptide reads, in one-letter code: Putative disease resistance RPP13-like protein 2 (847 aa).

Residues 26–42 (GVKDDLEELKTELTCIQ) are a coiled coil. In terms of domain architecture, NB-ARC spans 142–446 (STSRVREVRR…AEGFIQEDEE (305 aa)). 191 to 198 (GMEGLGKT) serves as a coordination point for ATP. LRR repeat units lie at residues 587–610 (LVHL…ISNL), 612–634 (FLQT…NLTS), 703–726 (LKNL…TVRF), 749–774 (FPSL…KLQR), and 807–830 (IKRL…NLDN).

Belongs to the disease resistance NB-LRR family. RPP13 subfamily.

Potential disease resistance protein. This chain is Putative disease resistance RPP13-like protein 2 (RPP13L2), found in Arabidopsis thaliana (Mouse-ear cress).